The following is a 145-amino-acid chain: Probable inactive ribonuclease-like protein 12 (145 aa).

Residues 1–19 form the signal peptide; sequence MVLMVVVFLLLLFWENELT.

The protein belongs to the pancreatic ribonuclease family.

Its subcellular location is the secreted. Functionally, does not exhibit any ribonuclease activity. This chain is Probable inactive ribonuclease-like protein 12 (Rnase12), found in Mus musculus (Mouse).